We begin with the raw amino-acid sequence, 461 residues long: Asparagine--tRNA ligase (461 aa).

The protein belongs to the class-II aminoacyl-tRNA synthetase family. Homodimer.

It is found in the cytoplasm. The catalysed reaction is tRNA(Asn) + L-asparagine + ATP = L-asparaginyl-tRNA(Asn) + AMP + diphosphate + H(+). The chain is Asparagine--tRNA ligase from Geobacter metallireducens (strain ATCC 53774 / DSM 7210 / GS-15).